The following is a 430-amino-acid chain: Palmitoyltransferase ZDHHC11 (430 aa).

Residues 1-46 (MTNLNCFGRHRRRTAPHNATGSRSELVAPPIHSRINGWSSPLHSFQ) are Cytoplasmic-facing. The helical transmembrane segment at 47-67 (FIALLIFSFMAIVAFGIYVPL) threads the bilayer. At 68 to 76 (LPAPWSYAA) the chain is on the lumenal side. Residues 77–97 (YALIGSAFVLHLFSHVTAVTI) form a helical membrane-spanning segment. Residues 98 to 176 (DPADVNVRRR…GGRNYWFFFT (79 aa)) are Cytoplasmic-facing. The region spanning 129-179 (LHCTLCEVDVSPKAKHCSTCNKCIADFDHHCKWLNNCVGGRNYWFFFTAVS) is the DHHC domain. The S-palmitoyl cysteine intermediate role is filled by Cys-159. A helical membrane pass occupies residues 177 to 197 (AVSSAVIGVILLIPLVLFVFI). Residues 198-234 (EHYVNPAVLRTAPQFQTVKGNGTWLVFLPVAPVETSS) are Lumenal-facing. Residues 235–255 (ISLLVVSFITALLSLAALLLL) traverse the membrane as a helical segment. Topologically, residues 256 to 430 (CHLLCFHIYL…QYLHFKQKMP (175 aa)) are cytoplasmic.

It belongs to the DHHC palmitoyltransferase family.

The protein localises to the endoplasmic reticulum membrane. The enzyme catalyses L-cysteinyl-[protein] + hexadecanoyl-CoA = S-hexadecanoyl-L-cysteinyl-[protein] + CoA. Functionally, endoplasmic reticulum-localized palmitoyltransferase that could catalyze the addition of palmitate onto protein substrates. This Danio rerio (Zebrafish) protein is Palmitoyltransferase ZDHHC11.